We begin with the raw amino-acid sequence, 419 residues long: Potassium/proton antiporter CemA (419 aa).

The next 4 helical transmembrane spans lie at 196–216, 297–317, 344–364, and 371–391; these read LASI…TLLF, IIEL…LCIA, ILLI…EVLI, and FGFV…PVVL.

Belongs to the CemA family.

It is found in the plastid. The protein resides in the chloroplast inner membrane. The catalysed reaction is K(+)(in) + H(+)(out) = K(+)(out) + H(+)(in). Functionally, contributes to K(+)/H(+) antiport activity by supporting proton efflux to control proton extrusion and homeostasis in chloroplasts in a light-dependent manner to modulate photosynthesis. Prevents excessive induction of non-photochemical quenching (NPQ) under continuous-light conditions. Indirectly promotes efficient inorganic carbon uptake into chloroplasts. The protein is Potassium/proton antiporter CemA of Chara vulgaris (Common stonewort).